The sequence spans 348 residues: MDKFRMIFQFLQSNQESFMNGICGIMALASAQMYSAFDFNCPCLPGYNVVYSLGILLTPPLVLFLLGLVMNNNISMLAEEWKRPAGRRAKDPAVLRYMFCSMAQRALIAPVVWVAVTLLDGKCFLCAFCTAVPVATLGNGSLVPGLPAPELARLLARVPCPEIYDGNWLLAREVAVRYLRCISQALGWSFVLLTTLLAFVVRSVRPCFTQVAFLKSKYWSHYIDIERKLFDETCTEHAKAFAKVCIQQFFEAMNHDLELGHTHGVLATATATATATEAVQSPSDRTEEEREKLRGITDQGTMNRLLTSWHKCKPPLRLGQEAPLMSNGWAGGEPRPPRKEVATYFSKV.

At 1-20 the chain is on the cytoplasmic side; it reads MDKFRMIFQFLQSNQESFMN. A central pore region spans residues 9–36; that stretch reads QFLQSNQESFMNGICGIMALASAQMYSA. The helical transmembrane segment at 21–36 threads the bilayer; that stretch reads GICGIMALASAQMYSA. Residues 37–48 are Extracellular-facing; sequence FDFNCPCLPGYN. 2 disulfide bridges follow: C41–C126 and C43–C160. The chain crosses the membrane as a helical span at residues 49–71; it reads VVYSLGILLTPPLVLFLLGLVMN. The interval 62-69 is phospholipid-binding; sequence VLFLLGLV. Residues 72-98 lie on the Cytoplasmic side of the membrane; sequence NNISMLAEEWKRPAGRRAKDPAVLRYM. A helical membrane pass occupies residues 99–124; it reads FCSMAQRALIAPVVWVAVTLLDGKCF. The S-palmitoyl cysteine moiety is linked to residue C100. The tract at residues 104-116 is phospholipid-binding; the sequence is QRALIAPVVWVAV. Topologically, residues 125–179 are extracellular; it reads LCAFCTAVPVATLGNGSLVPGLPAPELARLLARVPCPEIYDGNWLLAREVAVRYL. N139 is a glycosylation site (N-linked (GlcNAc...) asparagine). The helical transmembrane segment at 180 to 205 threads the bilayer; sequence RCISQALGWSFVLLTTLLAFVVRSVR. The segment at 191-201 is phospholipid-binding; it reads VLLTTLLAFVV. The Cytoplasmic portion of the chain corresponds to 206-348; that stretch reads PCFTQVAFLK…KEVATYFSKV (143 aa). The S-palmitoyl cysteine moiety is linked to residue C207. Residues 324–348 form a disordered region; it reads LMSNGWAGGEPRPPRKEVATYFSKV.

Belongs to the CALHM family. In terms of assembly, oligomerizes to form hexamers and octamers. Does not form gap junctions. Associates with CALHM3 as a pore-forming subunit in a hetero-hexameric channel complex. Post-translationally, N-glycosylated. Assembly with CALHM3 is associated with N-glycan remodeling and formation of hybrid complex- and high mannose-type glycochains. This N-glycan processing regulates channel trafficking and gating kinetics. In terms of processing, palmitoylated by ZDHHC3, ZDHHC20 and possibly ZDHHC7. Palmitoylation regulates voltage-dependent gating of the channel by shifting it toward more depolarized potentials. In terms of tissue distribution, specifically expressed in type II taste bud cells (at protein level). Not expressed in brain.

The protein resides in the cell membrane. Its subcellular location is the endoplasmic reticulum membrane. It localises to the basolateral cell membrane. It catalyses the reaction ATP(in) = ATP(out). The catalysed reaction is Ca(2+)(in) = Ca(2+)(out). It carries out the reaction Mg(2+)(in) = Mg(2+)(out). The enzyme catalyses Na(+)(in) = Na(+)(out). It catalyses the reaction K(+)(in) = K(+)(out). The catalysed reaction is Li(+)(in) = Li(+)(out). It carries out the reaction Rb(+)(in) = Rb(+)(out). The enzyme catalyses Cs(+)(in) = Cs(+)(out). It catalyses the reaction chloride(in) = chloride(out). Regulated by membrane voltage and extracellular Ca(2+). Inhibited by Gd(3+), ruthenium red, and Zn(2+) and partially inhibited by 2-aminoethoxydiphenyl borate. Pore-forming subunit of gustatory voltage-gated ion channels required for sensory perception of sweet, bitter and umami tastes. With CALHM3 forms a fast-activating voltage-gated ATP-release channel in type II taste bud cells, ATP acting as a neurotransmitter to activate afferent neural gustatory pathways. Acts both as a voltage-gated and calcium-activated ion channel: mediates neuronal excitability in response to membrane depolarization and low extracellular Ca(2+) concentration. Has poor ion selectivity and forms a wide pore (around 14 Angstroms) that mediates permeation of small ions including Ca(2+), Na(+), K(+) and Cl(-), as well as larger ions such as ATP(4-). Mediates Ca(2+) influx and downstream activation of the ERK1 and ERK2 cascade in neurons. Triggers endoplasmic reticulum stress by reducing the calcium content of the endoplasmic reticulum. May indirectly control amyloid precursor protein (APP) proteolysis and aggregated amyloid-beta (Abeta) peptides levels in a Ca(2+) dependent manner. This chain is Calcium homeostasis modulator protein 1, found in Mus musculus (Mouse).